Here is a 279-residue protein sequence, read N- to C-terminus: Probable endonuclease 4 (279 aa).

Zn(2+) is bound by residues His69, His109, Glu145, Asp179, His182, His216, Asp229, His231, and Glu261.

It belongs to the AP endonuclease 2 family. Requires Zn(2+) as cofactor.

The enzyme catalyses Endonucleolytic cleavage to 5'-phosphooligonucleotide end-products.. In terms of biological role, endonuclease IV plays a role in DNA repair. It cleaves phosphodiester bonds at apurinic or apyrimidinic (AP) sites, generating a 3'-hydroxyl group and a 5'-terminal sugar phosphate. In Chlorobium phaeovibrioides (strain DSM 265 / 1930) (Prosthecochloris vibrioformis (strain DSM 265)), this protein is Probable endonuclease 4.